The primary structure comprises 130 residues: Putative transposase for insertion sequence element IS6501 (130 aa).

It belongs to the transposase 11 family.

Its function is as follows. Involved in the transposition of the insertion sequence. The chain is Putative transposase for insertion sequence element IS6501 from Brucella ovis (strain ATCC 25840 / 63/290 / NCTC 10512).